The primary structure comprises 159 residues: Transcriptional repressor NrdR (159 aa).

Residues 3–34 (CPFCRHEDTQVVDSRVSEDGAAIRRRRRCSAC) fold into a zinc finger. The region spanning 49–139 (PAVVKKDGSR…VYRRFEDVSE (91 aa)) is the ATP-cone domain.

It belongs to the NrdR family. Requires Zn(2+) as cofactor.

Negatively regulates transcription of bacterial ribonucleotide reductase nrd genes and operons by binding to NrdR-boxes. This Burkholderia multivorans (strain ATCC 17616 / 249) protein is Transcriptional repressor NrdR.